The sequence spans 456 residues: Chromosomal replication initiator protein DnaA (456 aa).

The tract at residues M1 to L79 is domain I, interacts with DnaA modulators. A domain II region spans residues L79–K112. The segment at P89–K112 is disordered. The segment covering S90 to A108 has biased composition (pro residues). A domain III, AAA+ region region spans residues T113–S329. The ATP site is built by G157, G159, K160, and T161. The tract at residues S330–A456 is domain IV, binds dsDNA.

This sequence belongs to the DnaA family. In terms of assembly, oligomerizes as a right-handed, spiral filament on DNA at oriC.

It is found in the cytoplasm. Its function is as follows. Plays an essential role in the initiation and regulation of chromosomal replication. ATP-DnaA binds to the origin of replication (oriC) to initiate formation of the DNA replication initiation complex once per cell cycle. Binds the DnaA box (a 9 base pair repeat at the origin) and separates the double-stranded (ds)DNA. Forms a right-handed helical filament on oriC DNA; dsDNA binds to the exterior of the filament while single-stranded (ss)DNA is stabiized in the filament's interior. The ATP-DnaA-oriC complex binds and stabilizes one strand of the AT-rich DNA unwinding element (DUE), permitting loading of DNA polymerase. After initiation quickly degrades to an ADP-DnaA complex that is not apt for DNA replication. Binds acidic phospholipids. The protein is Chromosomal replication initiator protein DnaA of Deinococcus deserti (strain DSM 17065 / CIP 109153 / LMG 22923 / VCD115).